Reading from the N-terminus, the 146-residue chain is Large ribosomal subunit protein uL16 (146 aa).

This sequence belongs to the universal ribosomal protein uL16 family. In terms of assembly, part of the 50S ribosomal subunit.

Binds 23S rRNA and is also seen to make contacts with the A and possibly P site tRNAs. This is Large ribosomal subunit protein uL16 from Lactobacillus helveticus (strain DPC 4571).